The following is a 155-amino-acid chain: Endoribonuclease YbeY (155 aa).

Zn(2+) is bound by residues histidine 113, histidine 117, and histidine 123.

The protein belongs to the endoribonuclease YbeY family. The cofactor is Zn(2+).

It is found in the cytoplasm. Single strand-specific metallo-endoribonuclease involved in late-stage 70S ribosome quality control and in maturation of the 3' terminus of the 16S rRNA. This Ureaplasma urealyticum serovar 10 (strain ATCC 33699 / Western) protein is Endoribonuclease YbeY.